Reading from the N-terminus, the 158-residue chain is uncharacterized protein (158 aa).

Transmembrane regions (helical) follow at residues 42–62 (FHFA…GFLY), 71–91 (WIFI…HLIA), 102–122 (LLTG…QMFL), and 130–150 (ELII…PLLF).

It localises to the cell membrane. This is an uncharacterized protein from Bacillus subtilis (strain 168).